We begin with the raw amino-acid sequence, 80 residues long: SPI-1 type 3 secretion system needle filament protein (80 aa).

Belongs to the SctF family. In terms of assembly, the core secretion machinery of the T3SS is composed of approximately 20 different proteins, including cytoplasmic components, a base, an export apparatus and a needle. This subunit polymerizes and forms the helical needle filament. Interacts with the needle tip protein SipD/SctA. Interacts with the needle adapter protein PrgJ/SctI, the secretin InvG/SctC and the minor export apparatus protein SpaP/SctR. In vitro, the needle protomer refolds spontaneously to extend the needle from the distal end.

The protein localises to the secreted. The protein resides in the cell surface. Binding of bile salts, including deoxycholate, to the PrgI:SipD interface may inhibit the T3SS function. Functionally, component of the type III secretion system (T3SS), also called injectisome, which is used to inject bacterial effector proteins into eukaryotic host cells. PrgI/SctF1 forms the external needle filament that protrudes from the bacterial surface. Is probably involved in the transduction of an activating signal, thought to be mediated by the distal tip of the needle filament, to the secretion machine. Required for invasion of epithelial cells. Required for the secretion of the effector protein SptP. During infection, can induce innate immune responses. The needle proteins interact with host TLR2 or TLR4, and induce signaling by NF-kappa-B and/or AP-1. This activation is MyD88 dependent and results in increased expression of cytokines, including TNF-alpha, IL-6 and IL-8. This chain is SPI-1 type 3 secretion system needle filament protein, found in Salmonella typhimurium (strain LT2 / SGSC1412 / ATCC 700720).